A 581-amino-acid chain; its full sequence is NADH-quinone oxidoreductase subunit C/D (581 aa).

Residues 1–172 (MSASELVTEL…PLFNMTASLF (172 aa)) form an NADH dehydrogenase I subunit C region. Positions 196 to 581 (ELMILNYGPH…IDYVMSDVDR (386 aa)) are NADH dehydrogenase I subunit D.

In the N-terminal section; belongs to the complex I 30 kDa subunit family. The protein in the C-terminal section; belongs to the complex I 49 kDa subunit family. In terms of assembly, NDH-1 is composed of 13 different subunits. Subunits NuoB, CD, E, F, and G constitute the peripheral sector of the complex.

It localises to the cell inner membrane. The enzyme catalyses a quinone + NADH + 5 H(+)(in) = a quinol + NAD(+) + 4 H(+)(out). Functionally, NDH-1 shuttles electrons from NADH, via FMN and iron-sulfur (Fe-S) centers, to quinones in the respiratory chain. The immediate electron acceptor for the enzyme in this species is believed to be ubiquinone. Couples the redox reaction to proton translocation (for every two electrons transferred, four hydrogen ions are translocated across the cytoplasmic membrane), and thus conserves the redox energy in a proton gradient. This chain is NADH-quinone oxidoreductase subunit C/D, found in Rhodopseudomonas palustris (strain TIE-1).